The primary structure comprises 172 residues: Large ribosomal subunit protein uL10 (172 aa).

Belongs to the universal ribosomal protein uL10 family. As to quaternary structure, part of the ribosomal stalk of the 50S ribosomal subunit. The N-terminus interacts with L11 and the large rRNA to form the base of the stalk. The C-terminus forms an elongated spine to which L12 dimers bind in a sequential fashion forming a multimeric L10(L12)X complex.

In terms of biological role, forms part of the ribosomal stalk, playing a central role in the interaction of the ribosome with GTP-bound translation factors. This Chlamydia trachomatis serovar L2 (strain ATCC VR-902B / DSM 19102 / 434/Bu) protein is Large ribosomal subunit protein uL10.